Here is a 345-residue protein sequence, read N- to C-terminus: MKPDDCLNNIHIETENLDEVDLTKLTGEAHSLSNGIVPPFTDKTFRKATSFKQKCATYVLALRPWSFSASLIPVALGTAIAYRSGGSLDLLLFVVCAVAVLAVHGAGNLVNTYYDFSKGIDHKKSDDRTLVDHILEPQDVVRFGVFLYTLGCLCAACLYFISKLKLEHLALIYFGGLSSSFLYTGGIGFKYVALGDLVILITFGPLAVMFAHAVQVGYLAVTPLLYAVPLALSTEAILHSNNTRDMESDRQAGIVTLAILVGPMFSYMLYNLLVFLPYLIFSILATRYTISMALPLLTIPLAFSLERQFRSQNFNKIPQRTAKLNLLVGLFYVFGIVLAPAGSLP.

8 helical membrane passes run 60–80, 90–110, 141–161, 169–189, 213–233, 251–273, 285–305, and 324–344; these read LALR…GTAI, LLLF…GNLV, VRFG…LYFI, LALI…GIGF, AVQV…LALS, QAGI…YNLL, ATRY…AFSL, and LNLL…AGSL.

This sequence belongs to the UbiA prenyltransferase family.

It localises to the endoplasmic reticulum membrane. The protein resides in the golgi apparatus membrane. The protein localises to the mitochondrion membrane. The enzyme catalyses menadiol + (2E,6E,10E)-geranylgeranyl diphosphate = menaquinol-4 + diphosphate. It catalyses the reaction all-trans-decaprenyl diphosphate + 4-hydroxybenzoate = 4-hydroxy-3-(all-trans-decaprenyl)benzoate + diphosphate. The protein operates within quinol/quinone metabolism; menaquinone biosynthesis. It functions in the pathway cofactor biosynthesis; ubiquinone biosynthesis. In terms of biological role, prenyltransferase that mediates the formation of menaquinone-4 (MK-4) and coenzyme Q10. MK-4 is a vitamin K2 isoform required for endothelial cell development. Mediates the conversion of phylloquinone (PK) into MK-4, probably by cleaving the side chain of phylloquinone (PK) to release 2-methyl-1,4-naphthoquinone (menadione; K3) and then prenylating it with geranylgeranyl pyrophosphate (GGPP) to form MK-4. Also plays a role in cardiovascular development independently of MK-4 biosynthesis, by acting as a coenzyme Q10 biosynthetic enzyme: coenzyme Q10, also named ubiquinone, plays an important antioxidant role in the cardiovascular system. Mediates biosynthesis of coenzyme Q10 in the Golgi membrane, leading to protect cardiovascular tissues from NOS3/eNOS-dependent oxidative stress. In Xenopus tropicalis (Western clawed frog), this protein is UbiA prenyltransferase domain-containing protein 1 (ubiad1).